Here is a 300-residue protein sequence, read N- to C-terminus: MILLEVNNRIIEEILTLKFENAAAGNKPEAVEVTFADFDGVLYHVSNPNGDKAKVLISISLKFYKELQEHGTDEVLKKVYGNFLVAPESGYNVSLLYDLESLPSNKDSVIHQAGMLKRNCFASVFEKYFKFQEEGKDGEKRAVIHYRDDETMYVEAKKDRVTVVFSTVFKDDDDVVIGKVFMQEFKEGRRASHTAPQVLFSHREPPLELKDTDAAVGDNIGYITFVLFPRHTNANARDNTINLIHTFRDYLHYHIKCSKAYIHTRMRAKTSDFLKVLNRARPDAEKKEMKTITGKTFAAR.

Belongs to the ARPC2 family. Component of the Arp2/3 complex composed of actr2/arp2, actr3/arp3, arpc1 (arpc1a or arpc1b), arpc2, arpc3, arpc4 and arpc5.

It is found in the cytoplasm. It localises to the cytoskeleton. Its subcellular location is the cell projection. The protein resides in the nucleus. Its function is as follows. Actin-binding component of the Arp2/3 complex, a multiprotein complex that mediates actin polymerization upon stimulation by nucleation-promoting factor (NPF). The Arp2/3 complex mediates the formation of branched actin networks in the cytoplasm, providing the force for cell motility. In addition to its role in the cytoplasmic cytoskeleton, the Arp2/3 complex also promotes actin polymerization in the nucleus, thereby regulating gene transcription and repair of damaged DNA. The Arp2/3 complex promotes homologous recombination (HR) repair in response to DNA damage by promoting nuclear actin polymerization, leading to drive motility of double-strand breaks (DSBs). The sequence is that of Actin-related protein 2/3 complex subunit 2-A (arpc2-a) from Xenopus laevis (African clawed frog).